Reading from the N-terminus, the 411-residue chain is Arginine deiminase (411 aa).

Residue Cys401 is the Amidino-cysteine intermediate of the active site.

The protein belongs to the arginine deiminase family.

The protein localises to the cytoplasm. It carries out the reaction L-arginine + H2O = L-citrulline + NH4(+). It functions in the pathway amino-acid degradation; L-arginine degradation via ADI pathway; carbamoyl phosphate from L-arginine: step 1/2. The chain is Arginine deiminase from Staphylococcus epidermidis (strain ATCC 35984 / DSM 28319 / BCRC 17069 / CCUG 31568 / BM 3577 / RP62A).